The sequence spans 62 residues: Calmodulin regulator protein PCP4 (62 aa).

Positions 1 to 40 (MSERQGAGTTNGKDKPSGENDGQKKVQEEFDIDMDAPETE) are disordered. A compositionally biased stretch (basic and acidic residues) spans 12-28 (GKDKPSGENDGQKKVQE). Positions 28 to 40 (EEFDIDMDAPETE) are acidic; binds calcium and is required for modulating the calcium-binding kinetics of calmodulin. One can recognise an IQ domain in the interval 39-62 (TERAAVAIQSQFRKFQKKKAGSQS).

Belongs to the PCP4 family. As to quaternary structure, binds to both calcium-free and calcium-bound calmodulin. The affinity for the calcium-bound form is 50-fold greater.

Functions as a modulator of calcium-binding by calmodulin. Thereby, regulates calmodulin activity and the different processes it controls. For instance, may play a role in neuronal differentiation through activation of calmodulin-dependent kinase signaling pathways. This Bos taurus (Bovine) protein is Calmodulin regulator protein PCP4.